Reading from the N-terminus, the 254-residue chain is 3-deoxy-manno-octulosonate cytidylyltransferase (254 aa).

The protein belongs to the KdsB family.

It localises to the cytoplasm. It catalyses the reaction 3-deoxy-alpha-D-manno-oct-2-ulosonate + CTP = CMP-3-deoxy-beta-D-manno-octulosonate + diphosphate. Its pathway is nucleotide-sugar biosynthesis; CMP-3-deoxy-D-manno-octulosonate biosynthesis; CMP-3-deoxy-D-manno-octulosonate from 3-deoxy-D-manno-octulosonate and CTP: step 1/1. It participates in bacterial outer membrane biogenesis; lipopolysaccharide biosynthesis. In terms of biological role, activates KDO (a required 8-carbon sugar) for incorporation into bacterial lipopolysaccharide in Gram-negative bacteria. The polypeptide is 3-deoxy-manno-octulosonate cytidylyltransferase (Bordetella parapertussis (strain 12822 / ATCC BAA-587 / NCTC 13253)).